The primary structure comprises 284 residues: Aminoglycoside 6-adenylyltransferase (284 aa).

As to quaternary structure, homodimer.

It localises to the cytoplasm. It catalyses the reaction streptomycin + ATP = 6-O-adenylylstreptomycin + diphosphate. The enzyme catalyses streptomycin + GTP = 6-O-guanylylstreptomycin + diphosphate. The catalysed reaction is streptidine + ATP = 6-O-adenylylstreptidine + diphosphate. In terms of biological role, mediates bacterial resistance to streptomycin. Adenylates streptomycin on the O-6 residue. Adenylates streptidine on the O-6 residue. Does not act on spectinomycin, neomycin-B or kanamycin. Specific for ATP and GTP nucleotides incorporating a purine ring. No reaction with CTP or UTP. The chain is Aminoglycoside 6-adenylyltransferase from Bacillus subtilis (strain 168).